Consider the following 424-residue polypeptide: MFTIITGAQFGDEGKGKIVDLLAKDYDIVARFQGGNNAGHTVRVGNEVYKLHLIPSGILLNARVLIGPGVVLNPEVLAKEIAMFEKHGIQVNAEKLGVDAKTSIIMPYHIEMDGLREESREKKIGTTKRGIGYAYIDKVARDEFRMAELVDQERFLARLEELAPQKEKEIATLGGDPKIVRDPALIERYLELGKQFATYITDVSREINKALDEGKHVMAEAAQGTHLDVIHGTQKFVTSSSTIAGSACANLGVGPTRVNNVIAIVKAYITRVGEGPLPTELTGELGERLQKAGGEFGTTTGRGRRCGWFDLPLLKKAIALNGYTEISLTKLDVLTGLNPIRICTGYTFKGENLDYPPELTADLAECMPVYEDLPGWETDLTEVKAFEELPENARNYVKRLEELMEVPINYISVGPGRAQTFKKE.

GTP-binding positions include 11–17 and 39–41; these read GDEGKGK and GHT. Residue D12 is the Proton acceptor of the active site. D12 and G39 together coordinate Mg(2+). Residues 12–15, 37–40, T127, R141, Q223, T238, and R302 contribute to the IMP site; these read DEGK and NAGH. H40 functions as the Proton donor in the catalytic mechanism. A substrate-binding site is contributed by 298–304; it reads TTTGRGR. Residues R304, 330 to 332, and 412 to 414 each bind GTP; these read KLD and SVG.

Belongs to the adenylosuccinate synthetase family. In terms of assembly, homodimer. The cofactor is Mg(2+).

It is found in the cytoplasm. It carries out the reaction IMP + L-aspartate + GTP = N(6)-(1,2-dicarboxyethyl)-AMP + GDP + phosphate + 2 H(+). It participates in purine metabolism; AMP biosynthesis via de novo pathway; AMP from IMP: step 1/2. In terms of biological role, plays an important role in the de novo pathway of purine nucleotide biosynthesis. Catalyzes the first committed step in the biosynthesis of AMP from IMP. This Methanosarcina barkeri (strain Fusaro / DSM 804) protein is Adenylosuccinate synthetase.